The primary structure comprises 222 residues: Phosphoribosylformylglycinamidine synthase subunit PurQ (222 aa).

The Glutamine amidotransferase type-1 domain maps to 3-222 (AAVVVFPGSN…RALSGLLTDA (220 aa)). The active-site Nucleophile is the C86. Catalysis depends on residues H194 and E196.

In terms of assembly, part of the FGAM synthase complex composed of 1 PurL, 1 PurQ and 2 PurS subunits.

Its subcellular location is the cytoplasm. It catalyses the reaction N(2)-formyl-N(1)-(5-phospho-beta-D-ribosyl)glycinamide + L-glutamine + ATP + H2O = 2-formamido-N(1)-(5-O-phospho-beta-D-ribosyl)acetamidine + L-glutamate + ADP + phosphate + H(+). The enzyme catalyses L-glutamine + H2O = L-glutamate + NH4(+). It functions in the pathway purine metabolism; IMP biosynthesis via de novo pathway; 5-amino-1-(5-phospho-D-ribosyl)imidazole from N(2)-formyl-N(1)-(5-phospho-D-ribosyl)glycinamide: step 1/2. Part of the phosphoribosylformylglycinamidine synthase complex involved in the purines biosynthetic pathway. Catalyzes the ATP-dependent conversion of formylglycinamide ribonucleotide (FGAR) and glutamine to yield formylglycinamidine ribonucleotide (FGAM) and glutamate. The FGAM synthase complex is composed of three subunits. PurQ produces an ammonia molecule by converting glutamine to glutamate. PurL transfers the ammonia molecule to FGAR to form FGAM in an ATP-dependent manner. PurS interacts with PurQ and PurL and is thought to assist in the transfer of the ammonia molecule from PurQ to PurL. The protein is Phosphoribosylformylglycinamidine synthase subunit PurQ of Ruegeria sp. (strain TM1040) (Silicibacter sp.).